Here is a 239-residue protein sequence, read N- to C-terminus: Transcriptional regulatory protein RstA (239 aa).

Residues 3-116 (TIVFVEDDAE…VLLARLRLHL (114 aa)) form the Response regulatory domain. 4-aspartylphosphate is present on Asp52. A DNA-binding region (ompR/PhoB-type) is located at residues 136-235 (YKALHFGTLT…VRNKGYLFAP (100 aa)).

Phosphorylated by RstB.

It is found in the cytoplasm. Functionally, member of the two-component regulatory system RstB/RstA. In Escherichia coli (strain K12), this protein is Transcriptional regulatory protein RstA (rstA).